A 365-amino-acid chain; its full sequence is UPF0718 protein MJ0584 (365 aa).

11 consecutive transmembrane segments (helical) span residues 6 to 26 (MSFI…YLNV), 32 to 52 (LLMA…NFII), 67 to 87 (VAAV…PLFA), 108 to 128 (AINV…IGFL), 130 to 150 (AVFA…IFKS), 174 to 194 (ITFF…PKLF), 201 to 221 (LYDG…ILAV), 245 to 265 (IVFP…AIIP), 282 to 302 (FIAS…VPII), 308 to 328 (LGMG…LSIP), and 344 to 364 (TYLG…GIIL).

This sequence belongs to the UPF0718 family.

It localises to the cell membrane. This is UPF0718 protein MJ0584 from Methanocaldococcus jannaschii (strain ATCC 43067 / DSM 2661 / JAL-1 / JCM 10045 / NBRC 100440) (Methanococcus jannaschii).